The chain runs to 217 residues: Methylthioribulose-1-phosphate dehydratase (217 aa).

H106 and H108 together coordinate Zn(2+).

The protein belongs to the aldolase class II family. MtnB subfamily. The cofactor is Zn(2+).

The catalysed reaction is 5-(methylsulfanyl)-D-ribulose 1-phosphate = 5-methylsulfanyl-2,3-dioxopentyl phosphate + H2O. It functions in the pathway amino-acid biosynthesis; L-methionine biosynthesis via salvage pathway; L-methionine from S-methyl-5-thio-alpha-D-ribose 1-phosphate: step 2/6. Functionally, catalyzes the dehydration of methylthioribulose-1-phosphate (MTRu-1-P) into 2,3-diketo-5-methylthiopentyl-1-phosphate (DK-MTP-1-P). The chain is Methylthioribulose-1-phosphate dehydratase from Xanthomonas campestris pv. campestris (strain 8004).